Consider the following 419-residue polypeptide: Double-stranded RNA-binding protein 1 (419 aa).

DRBM domains are found at residues 15–84 (VFKS…ELAK) and 101–170 (LCKN…AIQS). A Bipartite nuclear localization motif is present at residues 207-222 (KARKAQFKKKAQKGKR). Tandem repeats lie at residues 247-274 (EKIE…SVET), 275-302 (EKIE…SVET), 303-330 (EKIE…SVET), 331-358 (EKIE…SVET), 359-386 (EKIE…SVET), and 387-414 (EKIE…SVET). Positions 247–414 (EKIETTPNLE…KEAAFGSVET (168 aa)) are 6 X 28 AA repeats of E-K-I-E-T-T-P-N-L-E-[PS]-[PS]-S-C-M-[NS]-G-L-K-E-A-A-F-G-S-V-E-T.

As to quaternary structure, homodimer. Heterodimer with DRB2, DRB4 or DRB5. Interacts with SE and DCL1. Interacts with RCF3, RS40 and RS41. As to expression, expressed in rosette and cauline leaves, stems, roots, flowers and siliques.

Its subcellular location is the nucleus. The protein localises to the nucleus speckle. Double-stranded RNA-binding protein involved in RNA-mediated post-transcriptional gene silencing (PTGS). Functions in the microRNAs (miRNAs) biogenesis by assisting DICER-LIKE 1 (DCL1) in the accurate processing from primary miRNAs (pri-miRNAs) to miRNAs in the nucleus. Forms a complex with SERRATE (SE) and DCL1 to promote accurate processing of pri-miRNAs by DCL1. Binds and assist DCL1 for accurate processing of precursor miRNAs (pre-miRNA). Indirectly involved in the production of trans-acting small interfering RNAs (ta-siRNAs) derived from the TAS1, TAS2 or TAS3 endogenous transcripts by participating in the production of their initiating miRNAs. Involved with argonaute 1 (AGO1) in the guide strand selection from miRNA duplexes, presumably by directional loading of the miRNA duplex (guide stand and passenger strand) onto the RNA-induced silencing complex (RISC) for passenger strand degradation. Does not participate in sense transgene-induced post-transcriptional gene silencing (S-PTGS). Involved in several plant development aspects and response to hormones through its role in miRNAs processing. This Arabidopsis thaliana (Mouse-ear cress) protein is Double-stranded RNA-binding protein 1 (DRB1).